Here is a 382-residue protein sequence, read N- to C-terminus: Alkanesulfonate monooxygenase (382 aa).

This sequence belongs to the SsuD family.

The enzyme catalyses an alkanesulfonate + FMNH2 + O2 = an aldehyde + FMN + sulfite + H2O + 2 H(+). Catalyzes the desulfonation of aliphatic sulfonates. This Ectopseudomonas mendocina (strain ymp) (Pseudomonas mendocina) protein is Alkanesulfonate monooxygenase.